Consider the following 364-residue polypeptide: tRNA (adenine(58)-N(1))-methyltransferase catalytic subunit trm61 (364 aa).

S-adenosyl-L-methionine-binding positions include 114-116 (SAS), Glu135, Arg140, 167-168 (DV), and Asp186. A disordered region spans residues 280–309 (EQNLSSDAKVEDQDNDSMLGENKSSVSTET).

This sequence belongs to the class I-like SAM-binding methyltransferase superfamily. TRM61 family. In terms of assembly, heterotetramer; composed of two copies of TRM6 and two copies of TRM61.

Its subcellular location is the nucleus. It carries out the reaction adenosine(58) in tRNA + S-adenosyl-L-methionine = N(1)-methyladenosine(58) in tRNA + S-adenosyl-L-homocysteine + H(+). Functionally, catalytic subunit of tRNA (adenine-N(1)-)-methyltransferase, which catalyzes the formation of N(1)-methyladenine at position 58 (m1A58) in initiator methionyl-tRNA. The polypeptide is tRNA (adenine(58)-N(1))-methyltransferase catalytic subunit trm61 (cpd1) (Schizosaccharomyces pombe (strain 972 / ATCC 24843) (Fission yeast)).